The primary structure comprises 384 residues: MATPVEPPNGIRTPGKHYYSMWQSLFEIDTKYVPIKPIGRGAYGIVCSSVNRETNEKVAIKKINNAFENRIDALRTLRELKLLRHLRHENVIALKDVMMPIQRRSFKDVYLVYELMDTDLHQIIKSSQTLSNDHCQYFLFQLLRGLKYLHSANILHRDLKPGNLLINANCDLKICDFGLARTSSGKDQFMTEYVVTRWYRAPELLLCCDNYGTSIDVWSVGCIFADVLGRKPVFPGTECLNQLKLIINILGSQREEDIEFIDNPKARKYIKSLPYSPGTPFSRLYPNAHPLAIDLLQRMLVFDPSKRISVMEALQHPYMSPLYDPNTDPPAQVPINLDIDEDLVEETIREMMWEEILHYHPEAAVALLWKLFYELLLVPSRHRP.

One can recognise a Protein kinase domain in the interval 32–319; the sequence is YVPIKPIGRG…VMEALQHPYM (288 aa). ATP-binding positions include 38–46 and Lys61; that span reads IGRGAYGIV. Asp158 (proton acceptor) is an active-site residue. Thr191 is subject to Phosphothreonine. The TXY motif lies at 191-193; the sequence is TEY. At Tyr193 the chain carries Phosphotyrosine.

It belongs to the protein kinase superfamily. CMGC Ser/Thr protein kinase family. MAP kinase subfamily. Mg(2+) is required as a cofactor. Dually phosphorylated on Thr-191 and Tyr-193, which activates the enzyme. In terms of tissue distribution, expressed in vegetative organs such as leaf, root, or stem. In the reproductive organs, it is found in the ovary, but not in the stamen.

The enzyme catalyses L-seryl-[protein] + ATP = O-phospho-L-seryl-[protein] + ADP + H(+). It catalyses the reaction L-threonyl-[protein] + ATP = O-phospho-L-threonyl-[protein] + ADP + H(+). Its activity is regulated as follows. Activated by tyrosine and threonine phosphorylation. The polypeptide is Mitogen-activated protein kinase homolog 1 (MPK1) (Petunia hybrida (Petunia)).